The sequence spans 157 residues: 17.8 kDa class I heat shock protein (157 aa).

Residues 41–156 (ETSAITNARV…KAQVKSIDIS (116 aa)) form the sHSP domain.

Belongs to the small heat shock protein (HSP20) family. In terms of assembly, homodimer under normal physiological conditions. Aggregates in high oligomeric complexes after heat shock. Binds to AKR2A and to chloroplasts. Expressed ubiquitously at low levels under normal physiological conditions.

The protein localises to the cytoplasm. Cytosolic mediator for sorting and targeting of nascent chloroplast outer envelope membrane (OEM) proteins to the chloroplast. Functions as an AKR2A cofactor to facilitate the targeting of OEP7 to chloroplasts. The sequence is that of 17.8 kDa class I heat shock protein (HSP17.8) from Arabidopsis thaliana (Mouse-ear cress).